Consider the following 138-residue polypeptide: MKVFIAVFALIAVAAAEFTVSTTEDLQRYRTECVSSLNIPADYVEKFKKWEFPEDDTTMCYIKCVFNKMQLFDDTEGPLVDNLVHQLAHGRDAEEVRTEVLKCVDKNTDNNACHWAFRGFKCFQKNNLSLIKASIKKD.

Positions 1–16 are cleaved as a signal peptide; that stretch reads MKVFIAVFALIAVAAA. Arginine 30 serves as a coordination point for (5Z,8Z,11Z,14Z)-eicosatetraenoate. Arginine 30 and tyrosine 61 together coordinate (9Z)-hexadecenoate. Positions 30 and 61 each coordinate (9Z,12Z)-octadecadienoate. 3 disulfides stabilise this stretch: cysteine 33–cysteine 64, cysteine 60–cysteine 113, and cysteine 103–cysteine 122. Asparagine 127 is a glycosylation site (N-linked (GlcNAc...) asparagine).

The protein belongs to the PBP/GOBP family. In terms of assembly, monomer in solution. As to expression, high-level expression in female mouth parts, particularly in the proboscis (at protein level). Moderate-level expression in female antenna (at protein level). Expressed in testis but not in the accessory gland or ejaculatory duct (at protein level). Expressed in spermathecae (at protein level). Female salivary gland. Female chemosensory organs: antenna, palp and proboscis. Not detected in midgut.

It localises to the secreted. Its function is as follows. Involved in modulation of blood-feeding behavior and capacity in female mosquitoes. Required for normal oviposition. Required for normal fecundity and fertility of female and male mosquitoes. Required for normal expression of VGA1 gene, which encodes the egg yolk protein vitellogenin-A1. Involved in regulation of spermatozoa development. Required for normal female longevity when mosquitoes are maintained on regular sugar meal. Binds long chain fatty acids. Functionally, (Microbial infection) Facilitates shedding of dengue virus type 2 particles into mosquito saliva. Does not affect dengue virus type 2 replication or infection prevalence in midgut and salivary glands at 14 days after blood feeding. (Microbial infection) Facilitates shedding of Zika virus particles into mosquito saliva. Does not affect Zika virus replication or infection prevalence in midgut and salivary glands at 14 days after blood feeding. This chain is Odorant-binding protein 22, found in Aedes aegypti (Yellowfever mosquito).